Here is a 148-residue protein sequence, read N- to C-terminus: MGSQGSGGVPLVQAPYTVLLLPLGTSRQDPGAQSFFLWLRRMQALEREQDALWQGLELLQHGQAWFEDHLREAQRQQLHLGALGENFLTDLHSEPGRPPLAQIQKVNICLQNLIHEKELSRQQKGVTQPKEEMAQRGCTKGPRGPTRV.

Residues 120–148 (SRQQKGVTQPKEEMAQRGCTKGPRGPTRV) form a disordered region.

The polypeptide is Suppressor APC domain-containing protein 1 (SAPCD1) (Homo sapiens (Human)).